Here is a 209-residue protein sequence, read N- to C-terminus: Uracil phosphoribosyltransferase (209 aa).

5-phospho-alpha-D-ribose 1-diphosphate contacts are provided by residues Arg79, Arg104, and 131–139 (DPMLATGGS). Residues Ile194 and 199–201 (GDA) each bind uracil. Position 200 (Asp200) interacts with 5-phospho-alpha-D-ribose 1-diphosphate.

Belongs to the UPRTase family. Mg(2+) is required as a cofactor.

The enzyme catalyses UMP + diphosphate = 5-phospho-alpha-D-ribose 1-diphosphate + uracil. Its pathway is pyrimidine metabolism; UMP biosynthesis via salvage pathway; UMP from uracil: step 1/1. Its activity is regulated as follows. Allosterically activated by GTP. Its function is as follows. Catalyzes the conversion of uracil and 5-phospho-alpha-D-ribose 1-diphosphate (PRPP) to UMP and diphosphate. This Francisella tularensis subsp. novicida (strain U112) protein is Uracil phosphoribosyltransferase.